Here is a 184-residue protein sequence, read N- to C-terminus: Tyrosine-protein kinase receptor Tie-1 (184 aa).

Residues 1-164 (QLLQFAADVA…RMQEARKAYV (164 aa)) enclose the Protein kinase domain. Residue Asp25 is the Proton acceptor of the active site. Tyr53 carries the post-translational modification Phosphotyrosine; by autocatalysis.

This sequence belongs to the protein kinase superfamily. Tyr protein kinase family. Tie subfamily. Interacts with svep1. In terms of tissue distribution, expressed in most populations of endothelial cells in 24 hours embryos, including the endocardium.

The protein localises to the cell membrane. It catalyses the reaction L-tyrosyl-[protein] + ATP = O-phospho-L-tyrosyl-[protein] + ADP + H(+). Its function is as follows. Transmembrane tyrosine-protein kinase. Required for the formation of facial lymphatic structures and brain lymphatic endothelial cells. Also required for embryonic ventral and dorsal migration of parachordal lymphoblasts along the arterial intersegmental vessel. Plays a role in the embryonic formation of the dorsal longitudinal anastomotic vessel. In Danio rerio (Zebrafish), this protein is Tyrosine-protein kinase receptor Tie-1 (tie1).